The chain runs to 65 residues: Large ribosomal subunit protein bL35 (65 aa).

It belongs to the bacterial ribosomal protein bL35 family.

This chain is Large ribosomal subunit protein bL35, found in Yersinia pseudotuberculosis serotype O:1b (strain IP 31758).